We begin with the raw amino-acid sequence, 191 residues long: Small ribosomal subunit protein uS5 (191 aa).

Residues 20–83 (FADRLVAINR…EQAKRQMIRV (64 aa)) form the S5 DRBM domain. The segment at 158–191 (TSPRMVAQRRGKKVSDILKKDGEPAEAAAEPAEA) is disordered. The segment covering 170–180 (KVSDILKKDGE) has biased composition (basic and acidic residues). A compositionally biased stretch (low complexity) spans 182-191 (AEAAAEPAEA).

Belongs to the universal ribosomal protein uS5 family. Part of the 30S ribosomal subunit. Contacts proteins S4 and S8.

In terms of biological role, with S4 and S12 plays an important role in translational accuracy. Located at the back of the 30S subunit body where it stabilizes the conformation of the head with respect to the body. The protein is Small ribosomal subunit protein uS5 of Dinoroseobacter shibae (strain DSM 16493 / NCIMB 14021 / DFL 12).